Consider the following 158-residue polypeptide: Ribosome maturation factor RimP (158 aa).

This sequence belongs to the RimP family.

It is found in the cytoplasm. Required for maturation of 30S ribosomal subunits. This is Ribosome maturation factor RimP from Pseudomonas putida (strain ATCC 47054 / DSM 6125 / CFBP 8728 / NCIMB 11950 / KT2440).